We begin with the raw amino-acid sequence, 412 residues long: Multifunctional CCA protein (412 aa).

ATP contacts are provided by glycine 8 and arginine 11. CTP-binding residues include glycine 8 and arginine 11. Residues aspartate 21 and aspartate 23 each coordinate Mg(2+). Residues arginine 91, arginine 137, and arginine 140 each contribute to the ATP site. Residues arginine 91, arginine 137, and arginine 140 each contribute to the CTP site. The HD domain occupies 225 to 326 (TGIHVMMVID…ADMLQATDAY (102 aa)).

It belongs to the tRNA nucleotidyltransferase/poly(A) polymerase family. Bacterial CCA-adding enzyme type 1 subfamily. Monomer. Can also form homodimers and oligomers. Mg(2+) serves as cofactor. Ni(2+) is required as a cofactor.

It catalyses the reaction a tRNA precursor + 2 CTP + ATP = a tRNA with a 3' CCA end + 3 diphosphate. It carries out the reaction a tRNA with a 3' CCA end + 2 CTP + ATP = a tRNA with a 3' CCACCA end + 3 diphosphate. Catalyzes the addition and repair of the essential 3'-terminal CCA sequence in tRNAs without using a nucleic acid template. Adds these three nucleotides in the order of C, C, and A to the tRNA nucleotide-73, using CTP and ATP as substrates and producing inorganic pyrophosphate. tRNA 3'-terminal CCA addition is required both for tRNA processing and repair. Also involved in tRNA surveillance by mediating tandem CCA addition to generate a CCACCA at the 3' terminus of unstable tRNAs. While stable tRNAs receive only 3'-terminal CCA, unstable tRNAs are marked with CCACCA and rapidly degraded. This Nitrosomonas europaea (strain ATCC 19718 / CIP 103999 / KCTC 2705 / NBRC 14298) protein is Multifunctional CCA protein.